Reading from the N-terminus, the 257-residue chain is tRNA (guanine-N(1)-)-methyltransferase (257 aa).

Residues glycine 117 and 137-142 (LGDFVL) each bind S-adenosyl-L-methionine.

This sequence belongs to the RNA methyltransferase TrmD family. In terms of assembly, homodimer.

It is found in the cytoplasm. The enzyme catalyses guanosine(37) in tRNA + S-adenosyl-L-methionine = N(1)-methylguanosine(37) in tRNA + S-adenosyl-L-homocysteine + H(+). Its function is as follows. Specifically methylates guanosine-37 in various tRNAs. This is tRNA (guanine-N(1)-)-methyltransferase from Bordetella pertussis (strain Tohama I / ATCC BAA-589 / NCTC 13251).